The primary structure comprises 140 residues: Chromatin accessibility complex 16kD protein (140 aa).

The interval 111 to 140 (LNRSAGSDDDDDDDDDDDEEESESESESDE) is disordered. Over residues 117–140 (SDDDDDDDDDDDEEESESESESDE) the composition is skewed to acidic residues.

In terms of assembly, component of the chromatin accessibility complex (CHRAC), composed of Chrac-14, Chrac-16, Acf and Iswi. Forms a heterodimer with Chrac-14. The Chrac-14/Chrac-16 heterodimer interacts with Acf (via N-terminus). Stabilizes the interaction between Chrac-14 and Iswi.

It is found in the nucleus. Histone-like protein which promotes nucleosome sliding of ATP-dependent nucleosome remodeling complexes. Part of the chromatin-accessibility complex (CHRAC) which uses energy/ATP to increase the general accessibility of DNA in chromatin. As a heterodimer with Chrac-14, binds DNA and facilitates nucleosome sliding by Acf. As part of the CHRAC complex, required for oogenesis. This is Chromatin accessibility complex 16kD protein from Drosophila melanogaster (Fruit fly).